A 177-amino-acid chain; its full sequence is Large ribosomal subunit protein uL6 (177 aa).

The protein belongs to the universal ribosomal protein uL6 family. Part of the 50S ribosomal subunit.

Functionally, this protein binds to the 23S rRNA, and is important in its secondary structure. It is located near the subunit interface in the base of the L7/L12 stalk, and near the tRNA binding site of the peptidyltransferase center. In Bartonella quintana (strain Toulouse) (Rochalimaea quintana), this protein is Large ribosomal subunit protein uL6.